Consider the following 744-residue polypeptide: Eukaryotic translation initiation factor 3 subunit B (744 aa).

The interval 1 to 21 is disordered; it reads MAPSFDHLPDPEEDEYDEEEL. Over residues 11-21 the composition is skewed to acidic residues; the sequence is PEEDEYDEEEL. In terms of domain architecture, RRM spans 40–126; the sequence is TFVVIDGLPE…HTLRVNKLTD (87 aa). WD repeat units lie at residues 193–232, 234–290, 307–348, and 577–622; these read DRQH…RQKR, AHPF…PLRS, PIKR…LLDK, and ADHY…LREE.

This sequence belongs to the eIF-3 subunit B family. As to quaternary structure, component of the eukaryotic translation initiation factor 3 (eIF-3) complex.

The protein localises to the cytoplasm. In terms of biological role, RNA-binding component of the eukaryotic translation initiation factor 3 (eIF-3) complex, which is involved in protein synthesis of a specialized repertoire of mRNAs and, together with other initiation factors, stimulates binding of mRNA and methionyl-tRNAi to the 40S ribosome. The eIF-3 complex specifically targets and initiates translation of a subset of mRNAs involved in cell proliferation. The polypeptide is Eukaryotic translation initiation factor 3 subunit B (prt1) (Botryotinia fuckeliana (strain B05.10) (Noble rot fungus)).